A 294-amino-acid polypeptide reads, in one-letter code: Cyclin-dependent kinase A-1 (294 aa).

Residues 4-287 (YEKEEKIGEG…ARQALEHEYF (284 aa)) enclose the Protein kinase domain. ATP is bound by residues 10-18 (IGEGTYGVV) and Lys-33. Thr-14 carries the post-translational modification Phosphothreonine. Position 15 is a phosphotyrosine (Tyr-15). Asp-127 functions as the Proton acceptor in the catalytic mechanism. Thr-161 carries the phosphothreonine; by CAK modification.

This sequence belongs to the protein kinase superfamily. CMGC Ser/Thr protein kinase family. CDC2/CDKX subfamily. In terms of processing, phosphorylated at Thr-161 by CDKD-1. In terms of tissue distribution, expressed in the dividing region of the root apex and in differentiated cells such as those in the sclerenchyma, pericycle and parenchyma of the central cylinder.

The enzyme catalyses L-seryl-[protein] + ATP = O-phospho-L-seryl-[protein] + ADP + H(+). The catalysed reaction is L-threonyl-[protein] + ATP = O-phospho-L-threonyl-[protein] + ADP + H(+). It catalyses the reaction [DNA-directed RNA polymerase] + ATP = phospho-[DNA-directed RNA polymerase] + ADP + H(+). The sequence is that of Cyclin-dependent kinase A-1 (CDKA-1) from Oryza sativa subsp. japonica (Rice).